The chain runs to 283 residues: Thymidylate synthase (283 aa).

Residue Arg-22 coordinates dUMP. The active-site Nucleophile is Cys-160. DUMP is bound by residues 180–183, Asn-191, and 221–223; these read RSCD and HIY. Residue Asp-183 participates in (6R)-5,10-methylene-5,6,7,8-tetrahydrofolate binding. Ser-282 lines the (6R)-5,10-methylene-5,6,7,8-tetrahydrofolate pocket.

The protein belongs to the thymidylate synthase family. Bacterial-type ThyA subfamily. As to quaternary structure, homodimer.

It localises to the cytoplasm. It carries out the reaction dUMP + (6R)-5,10-methylene-5,6,7,8-tetrahydrofolate = 7,8-dihydrofolate + dTMP. Its pathway is pyrimidine metabolism; dTTP biosynthesis. Its function is as follows. Catalyzes the reductive methylation of 2'-deoxyuridine-5'-monophosphate (dUMP) to 2'-deoxythymidine-5'-monophosphate (dTMP) while utilizing 5,10-methylenetetrahydrofolate (mTHF) as the methyl donor and reductant in the reaction, yielding dihydrofolate (DHF) as a by-product. This enzymatic reaction provides an intracellular de novo source of dTMP, an essential precursor for DNA biosynthesis. This chain is Thymidylate synthase, found in Shewanella piezotolerans (strain WP3 / JCM 13877).